A 401-amino-acid polypeptide reads, in one-letter code: Voltage-gated potassium channel subunit beta-3 (401 aa).

Polar residues-rich tracts occupy residues 1-14 and 32-41; these read MQVS…TLRS and GVSMAQTKQR. Residues 1–49 form a disordered region; the sequence is MQVSFACTEQTLRSRTSEDRLCPSRPSGGQNGVSMAQTKQRTPPMGAKN. The NADP(+) site is built by threonine 90, tryptophan 91, glutamine 97, and aspartate 119. Tyrosine 124 (proton donor/acceptor) is an active-site residue. NADP(+) is bound by residues asparagine 192, serine 222, arginine 223, glutamine 248, tryptophan 277, serine 278, proline 279, leucine 280, alanine 281, cysteine 282, lysine 288, arginine 298, glycine 357, serine 359, glutamine 363, glutamate 366, and asparagine 367.

The protein belongs to the shaker potassium channel beta subunit family. As to quaternary structure, forms heteromultimeric complex with alpha subunits. Identified in potassium channel complexes containing KCNA1 and KCNA2.

The protein localises to the cytoplasm. Its function is as follows. Regulatory subunit of the voltage-gated potassium (Kv) channels composed of pore-forming and potassium-conducting alpha subunits and of regulatory beta subunit. The beta-3/KCNAB3 subunit may mediate closure of potassium channels. Increases and accelerates inactivation of Kv1.1/KCNA1 and Kv2.2/KCNA2 subunit-containing channels. May display nicotinamide adenine dinucleotide phosphate (NADPH)-dependent aldoketoreductase activity. The binding of oxidized and reduced NADP(H) cofactors may be required for the regulation of potassium channel activity. The sequence is that of Voltage-gated potassium channel subunit beta-3 (kcnab3) from Xenopus laevis (African clawed frog).